A 312-amino-acid polypeptide reads, in one-letter code: DNA-directed RNA polymerase subunit alpha (312 aa).

An alpha N-terminal domain (alpha-NTD) region spans residues 1–226; it reads MIEFEKPIIT…EHLNLFTDLT (226 aa). The alpha C-terminal domain (alpha-CTD) stretch occupies residues 242–312; that stretch reads NDEKVLDRTI…DLGLGLKNDK (71 aa).

The protein belongs to the RNA polymerase alpha chain family. As to quaternary structure, homodimer. The RNAP catalytic core consists of 2 alpha, 1 beta, 1 beta' and 1 omega subunit. When a sigma factor is associated with the core the holoenzyme is formed, which can initiate transcription.

The catalysed reaction is RNA(n) + a ribonucleoside 5'-triphosphate = RNA(n+1) + diphosphate. DNA-dependent RNA polymerase catalyzes the transcription of DNA into RNA using the four ribonucleoside triphosphates as substrates. This chain is DNA-directed RNA polymerase subunit alpha, found in Streptococcus agalactiae serotype Ia (strain ATCC 27591 / A909 / CDC SS700).